Reading from the N-terminus, the 337-residue chain is DNA-directed RNA polymerase subunit alpha (337 aa).

Positions Met1–Glu233 are alpha N-terminal domain (alpha-NTD). The alpha C-terminal domain (alpha-CTD) stretch occupies residues Lys265–Leu337.

The protein belongs to the RNA polymerase alpha chain family. In terms of assembly, in plastids the minimal PEP RNA polymerase catalytic core is composed of four subunits: alpha, beta, beta', and beta''. When a (nuclear-encoded) sigma factor is associated with the core the holoenzyme is formed, which can initiate transcription.

It is found in the plastid. The protein resides in the chloroplast. The enzyme catalyses RNA(n) + a ribonucleoside 5'-triphosphate = RNA(n+1) + diphosphate. DNA-dependent RNA polymerase catalyzes the transcription of DNA into RNA using the four ribonucleoside triphosphates as substrates. The sequence is that of DNA-directed RNA polymerase subunit alpha from Phalaenopsis aphrodite subsp. formosana (Moth orchid).